Here is an 840-residue protein sequence, read N- to C-terminus: Phosphatidylglycerol lysyltransferase (840 aa).

The Cytoplasmic segment spans residues 1–8; that stretch reads MNQEVKNK. Residues 9–29 traverse the membrane as a helical segment; the sequence is IFSILKITFATALFIFVVITL. Residues 30 to 52 are Extracellular-facing; that stretch reads YRELSGINFKDTLVEFSKINRMS. The chain crosses the membrane as a helical span at residues 53–73; sequence LVLLFIGGGASLVILSMYDVI. The Cytoplasmic portion of the chain corresponds to 74–89; it reads LSRALKMDISLGKVLR. Residues 90–110 traverse the membrane as a helical segment; that stretch reads VSYIINALNAIVGFGGFIGAG. Residues 111–128 lie on the Extracellular side of the membrane; it reads VRAMVYKNYTHDKKKLVH. The helical transmembrane segment at 129–149 threads the bilayer; that stretch reads FISLILISMLTGLSLLSLLIV. Residues 150 to 161 are Cytoplasmic-facing; sequence FHVFDASLILNK. Residues 162-182 form a helical membrane-spanning segment; the sequence is ITWVRWVLYAVSLFLPLFIIY. Residues 183-200 are Extracellular-facing; sequence SMVRPPDKNNRYVGLYCT. Residues 201–221 form a helical membrane-spanning segment; it reads LVSCVEWLAAAVVLYFCGVIV. Residues 222-229 lie on the Cytoplasmic side of the membrane; sequence DVHVSFMS. Residues 230-250 form a helical membrane-spanning segment; the sequence is FIAIFIIAALSGLVSFIPGGF. Residues 251 to 271 are Extracellular-facing; it reads GAFDLVVLLGFKTLGVPEEKV. The helical transmembrane segment at 272–292 threads the bilayer; that stretch reads LLMLLLYRFAYYFVPVIIALI. At 293–337 the chain is on the cytoplasmic side; that stretch reads LSSFEFGTSAKKYIEGSKYFIPAKDVTSFLMSYQKDIIAKIPSLS. A helical membrane pass occupies residues 338 to 358; that stretch reads LAILVFFTSMIFFVNNLTIVY. The Extracellular portion of the chain corresponds to 359–369; sequence DALYDGNHLTY. A helical membrane pass occupies residues 370–390; sequence YLLLAIHTSACLLLLLNVVGI. Over 391–394 the chain is Cytoplasmic; the sequence is YKQS. 2 helical membrane passes run 395-415 and 416-436; these read RRAIIYAMISIILIIVATLFT and YASYILITWLVIIFALLIVAF. Over 437-450 the chain is Cytoplasmic; the sequence is RRARRLKRPIRMRN. A helical transmembrane segment spans residues 451–471; it reads LVAMLLFSIFILYINHIFIAG. At 472 to 489 the chain is on the extracellular side; it reads TFYALDVYTIEMHTSVLK. Residues 490 to 510 form a helical membrane-spanning segment; it reads YYFWITILIIAIIVGAIAWLF. At 511–840 the chain is on the cytoplasmic side; sequence DYQFSKVRIS…SKVMRVIRHK (330 aa).

This sequence belongs to the LPG synthase family.

It localises to the cell membrane. The enzyme catalyses L-lysyl-tRNA(Lys) + a 1,2-diacyl-sn-glycero-3-phospho-(1'-sn-glycerol) = a 1,2-diacyl-sn-glycero-3-phospho-1'-(3'-O-L-lysyl)-sn-glycerol + tRNA(Lys). In terms of biological role, catalyzes the transfer of a lysyl group from L-lysyl-tRNA(Lys) to membrane-bound phosphatidylglycerol (PG), which produces lysylphosphatidylglycerol (LPG), a major component of the bacterial membrane with a positive net charge. LPG synthesis contributes to bacterial virulence as it is involved in the resistance mechanism against cationic antimicrobial peptides (CAMP) produces by the host's immune system (defensins, cathelicidins) and by the competing microorganisms (bacteriocins). In fact, the modification of anionic phosphatidylglycerol with positively charged L-lysine results in repulsion of the peptides. This chain is Phosphatidylglycerol lysyltransferase (mprF), found in Staphylococcus aureus (strain MRSA252).